We begin with the raw amino-acid sequence, 312 residues long: Methionyl-tRNA formyltransferase (312 aa).

109–112 (SILP) contributes to the (6S)-5,6,7,8-tetrahydrofolate binding site.

The protein belongs to the Fmt family.

It catalyses the reaction L-methionyl-tRNA(fMet) + (6R)-10-formyltetrahydrofolate = N-formyl-L-methionyl-tRNA(fMet) + (6S)-5,6,7,8-tetrahydrofolate + H(+). In terms of biological role, attaches a formyl group to the free amino group of methionyl-tRNA(fMet). The formyl group appears to play a dual role in the initiator identity of N-formylmethionyl-tRNA by promoting its recognition by IF2 and preventing the misappropriation of this tRNA by the elongation apparatus. This Dictyoglomus thermophilum (strain ATCC 35947 / DSM 3960 / H-6-12) protein is Methionyl-tRNA formyltransferase.